We begin with the raw amino-acid sequence, 228 residues long: MEEKKQQNVTIKGTKDGITLHLDDCCSFSELLKELDEKLSTHYYESDGRSLIEVRVKVGNRYLTEVQQEEIRTLIRNKKNLVVESIESDVITKAEAIAWKEETEIVPISKIVRSGQVLHVKGNLLLIGDVNPGGTVIAGGNIFVLGSLRGIAHAGYDGDSEAVIAASIMNPMQLRISDVTMRAPEEKEDGAEAAECAYINENNHIVVDRLQLLTHLRPNLTKLERGIV.

This sequence belongs to the MinC family. Interacts with MinD and FtsZ.

Functionally, cell division inhibitor that blocks the formation of polar Z ring septums. Rapidly oscillates between the poles of the cell to destabilize FtsZ filaments that have formed before they mature into polar Z rings. Prevents FtsZ polymerization. The polypeptide is Probable septum site-determining protein MinC (Bacillus mycoides (strain KBAB4) (Bacillus weihenstephanensis)).